The chain runs to 73 residues: Large ribosomal subunit protein bL31 (73 aa).

This sequence belongs to the bacterial ribosomal protein bL31 family. Type A subfamily. Part of the 50S ribosomal subunit.

Binds the 23S rRNA. The protein is Large ribosomal subunit protein bL31 of Brucella abortus (strain 2308).